A 943-amino-acid polypeptide reads, in one-letter code: Protein translocase subunit SecA (943 aa).

ATP-binding positions include Gln90, 108-112 (GEGKT), and Asp509. The interval 535 to 562 (PDNEHKPPIPKQRNSKSKGGFSRKAGSN) is disordered.

Belongs to the SecA family. Monomer and homodimer. Part of the essential Sec protein translocation apparatus which comprises SecA, SecYEG and auxiliary proteins SecDF. Other proteins may also be involved.

The protein resides in the cell inner membrane. It is found in the cellular thylakoid membrane. It localises to the cytoplasm. The catalysed reaction is ATP + H2O + cellular proteinSide 1 = ADP + phosphate + cellular proteinSide 2.. In terms of biological role, part of the Sec protein translocase complex. Interacts with the SecYEG preprotein conducting channel. Has a central role in coupling the hydrolysis of ATP to the transfer of proteins into and across the cell membrane, serving as an ATP-driven molecular motor driving the stepwise translocation of polypeptide chains across the membrane. Its function is as follows. Probably participates in protein translocation into and across both the cytoplasmic and thylakoid membranes in cyanobacterial cells. The chain is Protein translocase subunit SecA from Prochlorococcus marinus (strain AS9601).